Reading from the N-terminus, the 332-residue chain is Anthranilate phosphoribosyltransferase (332 aa).

5-phospho-alpha-D-ribose 1-diphosphate-binding positions include Gly79, 82-83 (GD), Ser87, 89-92 (NIST), 107-115 (KHGNRSVSS), and Ser119. An anthranilate-binding site is contributed by Gly79. Ser91 contacts Mg(2+). Asn110 serves as a coordination point for anthranilate. Arg165 contacts anthranilate. Asp223 and Glu224 together coordinate Mg(2+).

Belongs to the anthranilate phosphoribosyltransferase family. In terms of assembly, homodimer. It depends on Mg(2+) as a cofactor.

The enzyme catalyses N-(5-phospho-beta-D-ribosyl)anthranilate + diphosphate = 5-phospho-alpha-D-ribose 1-diphosphate + anthranilate. It participates in amino-acid biosynthesis; L-tryptophan biosynthesis; L-tryptophan from chorismate: step 2/5. Functionally, catalyzes the transfer of the phosphoribosyl group of 5-phosphorylribose-1-pyrophosphate (PRPP) to anthranilate to yield N-(5'-phosphoribosyl)-anthranilate (PRA). The chain is Anthranilate phosphoribosyltransferase from Yersinia pseudotuberculosis serotype O:3 (strain YPIII).